Reading from the N-terminus, the 129-residue chain is Large ribosomal subunit protein eL32 (129 aa).

It belongs to the eukaryotic ribosomal protein eL32 family.

The polypeptide is Large ribosomal subunit protein eL32 (rpl32e) (Archaeoglobus fulgidus (strain ATCC 49558 / DSM 4304 / JCM 9628 / NBRC 100126 / VC-16)).